The sequence spans 986 residues: Translation initiation factor IF-2 (986 aa).

Residues 75–94 show a composition bias toward basic and acidic residues; that stretch reads KRLSRLEEQSRKTYEKEQHL. Disordered regions lie at residues 75–105, 127–148, 185–258, and 277–394; these read KRLSRLEEQSRKTYEKEQHLSETLSPPAPPL, PPSKPLEIPVAETPASEEPDAP, SEVP…VSFD, and GRHK…HEED. Composition is skewed to low complexity over residues 185–210 and 218–235; these read SEVPESQVLPESRVLPESQVLSESPL and SEPQEQQELPELPELPEI. Over residues 292 to 313 the composition is skewed to basic and acidic residues; that stretch reads DALKDEFEPKPAEESRVEEKVV. Low complexity predominate over residues 315 to 338; sequence AKKPPVKAAADVKPKPVVADSSSS. Positions 339-348 are enriched in basic residues; sequence AKKKGKKKKK. In terms of domain architecture, tr-type G spans 483–653; that stretch reads TRPPVVTIMG…LTEAEMRELR (171 aa). A G1 region spans residues 492 to 499; that stretch reads GHVDHGKT. 492–499 is a binding site for GTP; the sequence is GHVDHGKT. The segment at 517–521 is G2; it reads GITQH. The tract at residues 539 to 542 is G3; it reads DTPG. GTP is bound by residues 539 to 543 and 593 to 596; these read DTPGH and NKID. Positions 593-596 are G4; that stretch reads NKID. Residues 629–631 are G5; sequence SAK.

This sequence belongs to the TRAFAC class translation factor GTPase superfamily. Classic translation factor GTPase family. IF-2 subfamily.

The protein resides in the cytoplasm. One of the essential components for the initiation of protein synthesis. Protects formylmethionyl-tRNA from spontaneous hydrolysis and promotes its binding to the 30S ribosomal subunits. Also involved in the hydrolysis of GTP during the formation of the 70S ribosomal complex. This Pelodictyon phaeoclathratiforme (strain DSM 5477 / BU-1) protein is Translation initiation factor IF-2.